We begin with the raw amino-acid sequence, 1748 residues long: Tight junction protein 1 (1748 aa).

The 88-residue stretch at 23 to 110 folds into the PDZ 1 domain; it reads TVTLHRAPGF…NAKITIRRKK (88 aa). The span at 102–112 shows a compositional bias: basic residues; it reads AKITIRRKKKV. The interval 102–189 is disordered; that stretch reads AKITIRRKKK…QPAKPTKVTL (88 aa). Positions 123-136 are enriched in acidic residues; that stretch reads PVSDNEEDSYDEEI. At serine 125 the chain carries Phosphoserine. A Phosphotyrosine modification is found at tyrosine 132. Residues 149–175 show a composition bias toward basic and acidic residues; that stretch reads RRSEKIWPRDRSASRERSLSPRSDRRS. Phosphoserine is present on residues serine 175, serine 178, and serine 179. At threonine 185 the chain carries Phosphothreonine. In terms of domain architecture, PDZ 2 spans 186 to 264; that stretch reads KVTLVKSRKN…KLKMVVQRDE (79 aa). Phosphoserine occurs at positions 212 and 241. A Phosphothreonine modification is found at threonine 267. Phosphoserine occurs at positions 275, 277, 280, 284, 290, 294, 297, 300, 323, 329, 334, 337, and 353. A disordered region spans residues 295–396; the sequence is LASDHSGRSH…PVYAQVGQPD (102 aa). A compositionally biased stretch (basic and acidic residues) spans 299-327; sequence HSGRSHDRPPRRSRSRSPDQRSEPSDHSR. Polar residues predominate over residues 329–338; it reads SPQQPSNGSL. Threonine 354 carries the post-translational modification Phosphothreonine. Over residues 357 to 377 the composition is skewed to basic and acidic residues; the sequence is KHADDHTPKTVEEVTVERNEK. The PDZ 3 domain occupies 421–502; the sequence is SMKLVKFRKG…GEEVTILAQK (82 aa). Residues 516-584 enclose the SH3 domain; it reads GDSFYIRTHF…PNKNRAEQLA (69 aa). Residues 598–779 enclose the Guanylate kinase-like domain; that stretch reads RADFWRFRGL…TTTINLNSMN (182 aa). Serine 617 and serine 622 each carry phosphoserine. Residues 633 to 876 form an occludin (OCLN)-binding region region; the sequence is YERVVLREAG…GTPPESAITR (244 aa). Threonine 809 is modified (phosphothreonine). 2 positions are modified to phosphoserine: serine 810 and serine 821. Position 822 is a phosphotyrosine (tyrosine 822). Phosphoserine occurs at positions 824, 828, and 837. 2 disordered regions span residues 825-1081 and 1095-1587; these read APGS…LRYE and DDKQ…PEFD. Residues threonine 846, threonine 848, threonine 854, threonine 861, and threonine 868 each carry the phosphothreonine modification. Residues 879 to 892 show a composition bias toward basic and acidic residues; that stretch reads EPVREDSSGMHHEN. Over residues 893-906 the composition is skewed to low complexity; the sequence is QTYPPYSPQAQPQP. Position 912 is a phosphoserine (serine 912). Composition is skewed to polar residues over residues 934–953 and 963–979; these read PETN…NLTN and PSTS…TPST. Serine 968 is subject to Phosphoserine. Basic and acidic residues predominate over residues 998–1014; it reads DPTKVYRKDPYPEEMMR. Residues 1061 to 1072 are compositionally biased toward polar residues; that stretch reads YESSSYTDQFSR. Phosphoserine occurs at positions 1071, 1111, and 1139. Basic and acidic residues predominate over residues 1110 to 1125; that stretch reads HSQDLDSRQHPEESSE. Residues tyrosine 1140 and tyrosine 1165 each carry the phosphotyrosine modification. The actin-binding region (ABR) stretch occupies residues 1151–1371; sequence RASALRHEEQ…FDRRSFENKP (221 aa). Composition is skewed to basic and acidic residues over residues 1269–1286 and 1336–1347; these read KMFE…KDVN and PPEDIVRSNHYD. Position 1354 is a phosphotyrosine (tyrosine 1354). Serine 1366 is modified (phosphoserine). Over residues 1389 to 1400 the composition is skewed to low complexity; the sequence is SQNQSNFSSYSS. Over residues 1403-1420 the composition is skewed to basic and acidic residues; it reads KPPEADGVDRSFGEKRYE. A Phosphoserine modification is found at serine 1413. 2 stretches are compositionally biased toward polar residues: residues 1459 to 1470 and 1512 to 1522; these read NSVSLDFQNSLV and GTEQTQKTVTP. Positions 1538-1547 are enriched in basic and acidic residues; the sequence is PFERKFESPK. Residues serine 1545 and serine 1617 each carry the phosphoserine modification. Residues 1634–1748 enclose the ZU5 domain; that stretch reads ATARGIFNSN…NCVSVLIDHF (115 aa).

Belongs to the MAGUK family. In terms of assembly, homodimer. Forms heterodimers TJP3. Forms a heterodimer (via PDZ2 domain) with TJP2/ZO2 (via PDZ2 domain). Interacts with OCLN, CALM, claudins, CGN/cingulin, CXADR, GJA12, GJD3 and UBN1. Interacts (via ZU5 domain) with CDC42BPB and MYZAP. Interacts (via PDZ domain) with GJA1. Interacts (via PDZ domains) with ANKRD2. Interacts with POPDC1 (via the C-terminus cytoplasmic tail). Interacts with HSPA4 and KIRREL1. Interacts with DLL1. Interacts with USP53 (via the C-terminal region). Interacts (via ABR region) with F-actin. Interacts with DNMBP (via C-terminal domain); required for the apical cell-cell junction localization of DNMBP. Interacts with SPEF1. Interacts (via N-terminus) with CTNNA1. Interacts with CLDN18. Interacts with CLDN16 (via TRV motif); this is a prerequisite for anchoring of CLDN16 at the tight junction. Interacts with PKP1; the interaction facilitates TJP1/ZO-1 localization to the plasma membrane. Interacts with PATJ (via PDZ1-6 domains); the interaction is required for attachment and extension of TJP1/ZO1 condensates along the apical cell interface. Post-translationally, phosphorylated at tyrosine redidues in response to epidermal growth factor (EGF). This response is dependent on an intact actin microfilament system. Dephosphorylated by PTPRJ. In terms of tissue distribution, the alpha-containing isoform is found in most epithelial cell junctions. The short isoform is found both in endothelial cells and the highly specialized epithelial junctions of renal glomeruli and Sertoli cells of the seminiferous tubules.

The protein localises to the cell membrane. It localises to the cell junction. The protein resides in the tight junction. Its subcellular location is the gap junction. It is found in the cell projection. The protein localises to the podosome. TJP1, TJP2, and TJP3 are closely related scaffolding proteins that link tight junction (TJ) transmembrane proteins such as claudins, junctional adhesion molecules, and occludin to the actin cytoskeleton. Forms a multistranded TJP1/ZO1 condensate which elongates to form a tight junction belt, the belt is anchored at the apical cell membrane via interaction with PATJ. The tight junction acts to limit movement of substances through the paracellular space and as a boundary between the compositionally distinct apical and basolateral plasma membrane domains of epithelial and endothelial cells. Necessary for lumenogenesis, and particularly efficient epithelial polarization and barrier formation. Plays a role in the regulation of cell migration by targeting CDC42BPB to the leading edge of migrating cells. Plays an important role in podosome formation and associated function, thus regulating cell adhesion and matrix remodeling. With TJP2 and TJP3, participates in the junctional retention and stability of the transcription factor DBPA, but is not involved in its shuttling to the nucleus. May play a role in mediating cell morphology changes during ameloblast differentiation via its role in tight junctions. The chain is Tight junction protein 1 from Homo sapiens (Human).